Reading from the N-terminus, the 173-residue chain is uncharacterized protein (173 aa).

A run of 4 helical transmembrane segments spans residues 13–35 (LQVI…PLLS), 50–72 (IIFI…FLGL), 107–129 (NYLI…KYLL), and 139–161 (GYLI…RLIL).

Its subcellular location is the cell membrane. This is an uncharacterized protein from Rickettsia prowazekii (strain Madrid E).